A 341-amino-acid chain; its full sequence is Fe-S cluster assembly protein DRE2 (341 aa).

Residues 1–157 (MNTLLLLHPT…FKKLSSPPTL (157 aa)) form an N-terminal SAM-like domain region. The tract at residues 151–171 (LSSPPTLTDSSEADEDEESQL) is disordered. The tract at residues 157-204 (LTDSSEADEDEESQLNEKLKGSKLIYFDESSDDEIIDEDELLRDDDGA) is linker. Residues 161 to 170 (SEADEDEESQ) show a composition bias toward acidic residues. Residues C215, C227, C230, and C232 each contribute to the [2Fe-2S] cluster site. The tract at residues 215–232 (CALPNGKRRKKACKDCTC) is fe-S binding site A. [4Fe-4S] cluster is bound by residues C304, C307, C315, and C318. 2 consecutive short sequence motifs (cx2C motif) follow at residues 304-307 (CGSC) and 315-318 (CDGC). The segment at 304–318 (CGSCALGDAFRCDGC) is fe-S binding site B.

The protein belongs to the anamorsin family. In terms of assembly, monomer. Interacts with TAH18. Interacts with MIA40. It depends on [2Fe-2S] cluster as a cofactor. [4Fe-4S] cluster serves as cofactor.

It is found in the cytoplasm. The protein resides in the mitochondrion intermembrane space. Functionally, component of the cytosolic iron-sulfur (Fe-S) protein assembly (CIA) machinery required for the maturation of extramitochondrial Fe-S proteins. Part of an electron transfer chain functioning in an early step of cytosolic Fe-S biogenesis, facilitating the de novo assembly of a [4Fe-4S] cluster on the scaffold complex CFD1-NBP35. Electrons are transferred to DRE2 from NADPH via the FAD- and FMN-containing protein TAH18. TAH18-DRE2 are also required for the assembly of the diferric tyrosyl radical cofactor of ribonucleotide reductase (RNR), probably by providing electrons for reduction during radical cofactor maturation in the catalytic small subunit RNR2. The chain is Fe-S cluster assembly protein DRE2 from Komagataella phaffii (strain GS115 / ATCC 20864) (Yeast).